Here is a 456-residue protein sequence, read N- to C-terminus: Exodeoxyribonuclease 7 large subunit (456 aa).

The protein belongs to the XseA family. Heterooligomer composed of large and small subunits.

It localises to the cytoplasm. The catalysed reaction is Exonucleolytic cleavage in either 5'- to 3'- or 3'- to 5'-direction to yield nucleoside 5'-phosphates.. Its function is as follows. Bidirectionally degrades single-stranded DNA into large acid-insoluble oligonucleotides, which are then degraded further into small acid-soluble oligonucleotides. The polypeptide is Exodeoxyribonuclease 7 large subunit (Lactobacillus johnsonii (strain CNCM I-12250 / La1 / NCC 533)).